Consider the following 514-residue polypeptide: Peptide chain release factor 3 (514 aa).

The 261-residue stretch at lysine 8–histidine 268 folds into the tr-type G domain. Residues serine 17–threonine 24, aspartate 85–histidine 89, and asparagine 139–aspartate 142 each bind GTP.

It belongs to the TRAFAC class translation factor GTPase superfamily. Classic translation factor GTPase family. PrfC subfamily.

The protein localises to the cytoplasm. In terms of biological role, increases the formation of ribosomal termination complexes and stimulates activities of RF-1 and RF-2. It binds guanine nucleotides and has strong preference for UGA stop codons. It may interact directly with the ribosome. The stimulation of RF-1 and RF-2 is significantly reduced by GTP and GDP, but not by GMP. The chain is Peptide chain release factor 3 from Streptococcus pneumoniae (strain 70585).